Reading from the N-terminus, the 89-residue chain is Cytochrome c oxidase subunit 7A, mitochondrial (89 aa).

The N-terminal 31 residues, 1-31 (MMNLSRAVVRSFATTAGRRSAAVPKDQIEKG), are a transit peptide targeting the mitochondrion. The Mitochondrial matrix segment spans residues 32 to 58 (YFEIRKVQEHFQKKDGKPVFLKGSVVD). The chain crosses the membrane as a helical span at residues 59-81 (NVLYRVTVALALVGIGGMGKLFY). Residues 82 to 89 (ELSVPKKE) lie on the Mitochondrial intermembrane side of the membrane.

The protein belongs to the cytochrome c oxidase VIIa family. As to quaternary structure, component of the cytochrome c oxidase (complex IV, CIV), a multisubunit enzyme composed of a catalytic core of 3 subunits and several supernumerary subunits. The complex exists as a monomer or a dimer and forms supercomplexes (SCs) in the inner mitochondrial membrane with ubiquinol-cytochrome c oxidoreductase (cytochrome b-c1 complex, complex III, CIII).

It localises to the mitochondrion inner membrane. It functions in the pathway energy metabolism; oxidative phosphorylation. Its function is as follows. Component of the cytochrome c oxidase, the last enzyme in the mitochondrial electron transport chain which drives oxidative phosphorylation. The respiratory chain contains 3 multisubunit complexes succinate dehydrogenase (complex II, CII), ubiquinol-cytochrome c oxidoreductase (cytochrome b-c1 complex, complex III, CIII) and cytochrome c oxidase (complex IV, CIV), that cooperate to transfer electrons derived from NADH and succinate to molecular oxygen, creating an electrochemical gradient over the inner membrane that drives transmembrane transport and the ATP synthase. Cytochrome c oxidase is the component of the respiratory chain that catalyzes the reduction of oxygen to water. Electrons originating from reduced cytochrome c in the intermembrane space (IMS) are transferred via the dinuclear copper A center (CU(A)) of subunit 2 and heme A of subunit 1 to the active site in subunit 1, a binuclear center (BNC) formed by heme A3 and copper B (CU(B)). The BNC reduces molecular oxygen to 2 water molecules using 4 electrons from cytochrome c in the IMS and 4 protons from the mitochondrial matrix. This is Cytochrome c oxidase subunit 7A, mitochondrial from Drosophila melanogaster (Fruit fly).